The chain runs to 338 residues: Protein FosB (338 aa).

Disordered stretches follow at residues Met1–Phe54 and Ala80–Leu179. Composition is skewed to polar residues over residues Ser13 to Ser31 and Thr102 to Tyr112. Ser27 bears the Phosphoserine mark. Over residues Pro123–Pro137 the composition is skewed to low complexity. The bZIP domain maps to Glu155–His218. Residues Lys157 to Arg182 are basic motif. Positions Leu183–Leu211 are leucine-zipper. 2 disordered regions span residues Cys222 to Leu276 and Gly316 to Leu338. Residues Leu256 to Pro265 show a composition bias toward pro residues. 2 stretches are compositionally biased toward polar residues: residues Phe266–Leu276 and Gln318–Leu338.

The protein belongs to the bZIP family. Fos subfamily. As to quaternary structure, heterodimer; binds to DNA as heterodimer. Component of an AP-1 transcription factor complex; composed of FOS-JUN heterodimers. As part of the AP-1 transcription factor complex, forms heterodimers with JUN, JUNB or JUND, thereby binding to the AP-1 consensus sequence and stimulating transcription. Interacts with the BAF multiprotein chromatin-remodeling complex subunits SMARCB1 and SMARCD1. Interacts with ARID1A and JUN. Homodimer under oxidizing conditions and monomer under reducing conditions (in vitro). Heterodimer; binds to DNA as heterodimer. Forms heterodimers with JUNB, JUN or JUND; thereby binding to the AP-1 consensus sequence but does not stimulate transcription. Forms heterodimers with JUND under oxidizing conditions. In terms of processing, phosphorylated. Post-translationally, phosphorylated at Ser-27 by CSNK2A1; phosphorylation increases protein stability and transactivation potential. Expressed in brain, including the preoptic area of the hypothalamus, the main and accessory olfactory bulbs, the pyriform cortex and the hippocampus (at protein level). Expressed in the neurons of the subgranular zone of the dentate gyrus in the hippocampus (at protein level). Expressed in pyramidal cells in CA1 and CA3, in the dentate gyrus and the nucleus accumbens of the striatum (at protein level). In terms of tissue distribution, expressed in the core and shell of the nucleus accumbens of the striatum (at protein level). Expressed in the neurons of the subgranular zone of the dentate gyrus in the hippocampus (at protein level).

Its subcellular location is the nucleus. Functionally, heterodimerizes with proteins of the JUN family to form an AP-1 transcription factor complex, thereby enhancing their DNA binding activity to gene promoters containing an AP-1 consensus sequence 5'-TGA[GC]TCA-3' and enhancing their transcriptional activity. As part of the AP-1 complex, facilitates enhancer selection together with cell-type-specific transcription factors by collaboratively binding to nucleosomal enhancers and recruiting the SWI/SNF (BAF) chromatin remodeling complex to establish accessible chromatin. Together with JUN, plays a role in activation-induced cell death of T cells by binding to the AP-1 promoter site of FASLG/CD95L, and inducing its transcription in response to activation of the TCR/CD3 signaling pathway. Exhibits transactivation activity in vitro. Involved in the display of nurturing behavior towards newborns. May play a role in neurogenesis in the hippocampus and in learning and memory-related tasks by regulating the expression of various genes involved in neurogenesis, depression and epilepsy. Implicated in behavioral responses related to morphine reward and spatial memory. In terms of biological role, exhibits lower transactivation activity than isoform 1 in vitro. The heterodimer with JUN does not display any transcriptional activity, and may thereby act as an transcriptional inhibitor. May be involved in the regulation of neurogenesis in the hippocampus. May play a role in synaptic modifications in nucleus accumbens medium spiny neurons and thereby play a role in adaptive and pathological reward-dependent learning, including maladaptive responses involved in drug addiction. Seems to be more stably expressed with a half-life of ~9.5 hours in cell culture as compared to 1.5 hours half-life of isoform 1. This chain is Protein FosB, found in Mus musculus (Mouse).